Reading from the N-terminus, the 257-residue chain is Expansin-A10 (257 aa).

Positions 1-18 (MAPCLLLVLFLLPALATG) are cleaved as a signal peptide. The 114-residue stretch at 50–163 (GGACGFGDLG…RRVNCLRDGG (114 aa)) folds into the Expansin-like EG45 domain. The 80-residue stretch at 173-252 (FFLTVLISNV…EWDFGKTYTG (80 aa)) folds into the Expansin-like CBD domain.

The protein belongs to the expansin family. Expansin A subfamily. As to expression, expressed in panicles and flowers.

The protein localises to the secreted. It localises to the cell wall. The protein resides in the membrane. In terms of biological role, may cause loosening and extension of plant cell walls by disrupting non-covalent bonding between cellulose microfibrils and matrix glucans. No enzymatic activity has been found. May be required for rapid internodal elongation in deepwater rice during submergence. This Oryza sativa subsp. japonica (Rice) protein is Expansin-A10 (EXPA10).